Here is a 505-residue protein sequence, read N- to C-terminus: Deoxyguanosinetriphosphate triphosphohydrolase (505 aa).

The HD domain maps to 66–273 (RLTHSMEVQQ…MEAADDISYC (208 aa)).

The protein belongs to the dGTPase family. Type 1 subfamily. As to quaternary structure, homotetramer. Mg(2+) is required as a cofactor.

It catalyses the reaction dGTP + H2O = 2'-deoxyguanosine + triphosphate + H(+). Functionally, dGTPase preferentially hydrolyzes dGTP over the other canonical NTPs. The protein is Deoxyguanosinetriphosphate triphosphohydrolase of Escherichia coli O17:K52:H18 (strain UMN026 / ExPEC).